A 102-amino-acid polypeptide reads, in one-letter code: Putative sortase YwpE (102 aa).

His-17 (proton donor/acceptor) is an active-site residue. The active-site Acyl-thioester intermediate is the Cys-78.

It belongs to the bacterial sortase family.

Seems not to play a major role if any as a sortase. In Bacillus subtilis (strain 168), this protein is Putative sortase YwpE (ywpE).